The following is a 114-amino-acid chain: Ig kappa chain V region AH80-5 (114 aa).

The tract at residues 1–22 is framework-1; sequence IVMTQTPSSKSVPVGDTVTINC. Positions 23–35 are complementarity-determining-1; sequence QAAQSVYSNNRLS. The interval 36-50 is framework-2; sequence WFQQKPGQPPKGLIY. Positions 51-57 are complementarity-determining-2; it reads YASTLAS. The interval 58-93 is framework-3; sequence GVQQDPSRFKGSGSGTQFTLTISDVQCBBAATVYYC. Positions 94–103 are complementarity-determining-3; the sequence is QGYKSSDTRA. Residues 104 to 113 form a framework-4 region; the sequence is FGGGTEVVVK.

The polypeptide is Ig kappa chain V region AH80-5 (Oryctolagus cuniculus (Rabbit)).